The following is a 249-amino-acid chain: 5'-nucleotidase SurE (249 aa).

A divalent metal cation-binding residues include D8, D9, S39, and N91.

Belongs to the SurE nucleotidase family. A divalent metal cation is required as a cofactor.

It is found in the cytoplasm. It carries out the reaction a ribonucleoside 5'-phosphate + H2O = a ribonucleoside + phosphate. Functionally, nucleotidase that shows phosphatase activity on nucleoside 5'-monophosphates. The sequence is that of 5'-nucleotidase SurE from Pseudomonas aeruginosa (strain UCBPP-PA14).